We begin with the raw amino-acid sequence, 93 residues long: UPF0358 protein BH2626 (93 aa).

It belongs to the UPF0358 family.

The chain is UPF0358 protein BH2626 from Halalkalibacterium halodurans (strain ATCC BAA-125 / DSM 18197 / FERM 7344 / JCM 9153 / C-125) (Bacillus halodurans).